Here is a 178-residue protein sequence, read N- to C-terminus: E1B protein, small T-antigen (178 aa).

This sequence belongs to the adenoviridae E1B 19 kDa protein family.

The protein resides in the host cell membrane. It localises to the host nucleus envelope. Its subcellular location is the host nucleus lamina. Putative adenovirus Bcl-2 homolog that inhibits apoptosis induced by TNF or FAS pathways, as well as p53-mediated apoptosis. Without E1B 19K function, virus production is compromised because of premature death of host cell. Interacts with Bax protein in cell lysates. The protein is E1B protein, small T-antigen of Human adenovirus B serotype 7 (HAdV-7).